Consider the following 499-residue polypeptide: Aspartyl/glutamyl-tRNA(Asn/Gln) amidotransferase subunit B (499 aa).

Belongs to the GatB/GatE family. GatB subfamily. As to quaternary structure, heterotrimer of A, B and C subunits.

It carries out the reaction L-glutamyl-tRNA(Gln) + L-glutamine + ATP + H2O = L-glutaminyl-tRNA(Gln) + L-glutamate + ADP + phosphate + H(+). It catalyses the reaction L-aspartyl-tRNA(Asn) + L-glutamine + ATP + H2O = L-asparaginyl-tRNA(Asn) + L-glutamate + ADP + phosphate + 2 H(+). Functionally, allows the formation of correctly charged Asn-tRNA(Asn) or Gln-tRNA(Gln) through the transamidation of misacylated Asp-tRNA(Asn) or Glu-tRNA(Gln) in organisms which lack either or both of asparaginyl-tRNA or glutaminyl-tRNA synthetases. The reaction takes place in the presence of glutamine and ATP through an activated phospho-Asp-tRNA(Asn) or phospho-Glu-tRNA(Gln). This chain is Aspartyl/glutamyl-tRNA(Asn/Gln) amidotransferase subunit B, found in Salinispora tropica (strain ATCC BAA-916 / DSM 44818 / JCM 13857 / NBRC 105044 / CNB-440).